Here is a 165-residue protein sequence, read N- to C-terminus: NADPH-dependent 7-cyano-7-deazaguanine reductase (165 aa).

Cys56 acts as the Thioimide intermediate in catalysis. Asp63 functions as the Proton donor in the catalytic mechanism. Substrate-binding positions include 78 to 80 and 97 to 98; these read VES and HE.

It belongs to the GTP cyclohydrolase I family. QueF type 1 subfamily.

It localises to the cytoplasm. The enzyme catalyses 7-aminomethyl-7-carbaguanine + 2 NADP(+) = 7-cyano-7-deazaguanine + 2 NADPH + 3 H(+). The protein operates within tRNA modification; tRNA-queuosine biosynthesis. Functionally, catalyzes the NADPH-dependent reduction of 7-cyano-7-deazaguanine (preQ0) to 7-aminomethyl-7-deazaguanine (preQ1). The chain is NADPH-dependent 7-cyano-7-deazaguanine reductase from Bacillus licheniformis (strain ATCC 14580 / DSM 13 / JCM 2505 / CCUG 7422 / NBRC 12200 / NCIMB 9375 / NCTC 10341 / NRRL NRS-1264 / Gibson 46).